Reading from the N-terminus, the 201-residue chain is Ras-related protein Rab-1B (201 aa).

Methionine 1 is modified (N-acetylmethionine). 13 residues coordinate GTP: serine 17, glycine 18, valine 19, glycine 20, lysine 21, serine 22, cysteine 23, tyrosine 33, threonine 34, glutamate 35, serine 36, serine 39, and threonine 40. Serine 22 serves as a coordination point for Mg(2+). Positions 30 to 45 (DDTYTESYISTIGVDF) match the Switch 1 motif. The Mg(2+) site is built by threonine 40 and aspartate 63. Residues 64-83 (TAGQERFRTITSSYYRGAHG) are switch 2 region; required for interaction with REP1/CHM. Positions 65–80 (AGQERFRTITSSYYRG) match the Switch 2 motif. Glycine 66 contacts GTP. At serine 76 the chain carries (Microbial infection) O-(2-cholinephosphoryl)serine. A (Microbial infection) O-AMP-tyrosine modification is found at tyrosine 77. Residues asparagine 121, lysine 122, aspartate 124, serine 151, alanine 152, and lysine 153 each contribute to the GTP site. Residues 174 to 201 (GPGAASGGERPNLKIDSTPVKPAGGGCC) form a disordered region. 2 S-geranylgeranyl cysteine lipidation sites follow: cysteine 200 and cysteine 201. Cysteine 201 is modified (cysteine methyl ester).

Belongs to the small GTPase superfamily. Rab family. Interacts with MICAL1 and MICAL2. Interacts (in GTP-bound form) with MICALCL, MICAL1 and MILCAL3. Interacts with GDI1; the interaction requires the GDP-bound state. Interacts with CHM/REP1; the interaction requires the GDP-bound form and is necessary for prenylation by GGTase II. Interacts with RabGAP TBC1D20. Interacts (in GDP-bound form) with lipid phosphatase MTMR6 (via GRAM domain); the interaction regulates MTMR6 recruitment to the endoplasmic reticulum-Golgi intermediate compartment. Interacts (in GDP-bound form) with lipid phosphatase MTMR7. As to quaternary structure, (Microbial infection) Interacts with L.pneumophila AnkX. Interacts with L.pneumophila Lem3. Interacts with L.pneumophila SidD. Interacts with L.pneumophila DrrA. The cofactor is Mg(2+). In terms of processing, prenylated; by GGTase II, only after interaction of the substrate with Rab escort protein 1 (REP1). Post-translationally, (Microbial infection) AMPylation at Tyr-77 by L.pneumophila DrrA occurs in the switch 2 region and leads to moderate inactivation of the GTPase activity. It appears to prolong the lifetime of the GTP state of RAB1B by restricting access of GTPase effectors to switch 2 and blocking effector-stimulated GTP hydrolysis, thereby rendering RAB1B constitutively active. It is later de-AMPylated by L.pneumophila SidD, releasing RAB1B from bacterial phagosomes. (Microbial infection) Phosphocholinated at Ser-76 by L.pneumophila AnkX, leading to displace GDP dissociation inhibitors (GDI). Both GDP-bound and GTP-bound forms can be phosphocholinated. Dephosphocholinated by L.pneumophila Lem3, restoring accessibility to L.pneumophila GTPase effector LepB. In terms of processing, (Microbial infection) Glycosylated by S.typhimurium protein Ssek3: arginine GlcNAcylation prevents GTPase activity, thereby disrupting vesicular protein transport from the endoplasmic reticulum (ER) to the Golgi compartment.

The protein localises to the cytoplasm. It localises to the membrane. Its subcellular location is the preautophagosomal structure membrane. It is found in the perinuclear region. It catalyses the reaction GTP + H2O = GDP + phosphate + H(+). Its activity is regulated as follows. Regulated by guanine nucleotide exchange factors (GEFs) which promote the exchange of bound GDP for free GTP. Regulated by GTPase activating proteins (GAPs) including TBC1D20 which increases the GTP hydrolysis activity. Inhibited by GDP dissociation inhibitors (GDIs). In terms of biological role, the small GTPases Rab are key regulators of intracellular membrane trafficking, from the formation of transport vesicles to their fusion with membranes. Rabs cycle between an inactive GDP-bound form and an active GTP-bound form that is able to recruit to membranes different set of downstream effectors directly responsible for vesicle formation, movement, tethering and fusion. Plays a role in the initial events of the autophagic vacuole development which take place at specialized regions of the endoplasmic reticulum. Regulates vesicular transport between the endoplasmic reticulum and successive Golgi compartments. Required to modulate the compacted morphology of the Golgi. Promotes the recruitment of lipid phosphatase MTMR6 to the endoplasmic reticulum-Golgi intermediate compartment. This chain is Ras-related protein Rab-1B, found in Homo sapiens (Human).